We begin with the raw amino-acid sequence, 228 residues long: Large ribosomal subunit protein uL23m (228 aa).

The tract at residues 194–228 (PEEEGWSEVEENLPLDESAESAAEESSSKGSETRQ) is disordered. Residues 195–216 (EEEGWSEVEENLPLDESAESAA) show a composition bias toward acidic residues.

Belongs to the universal ribosomal protein uL23 family. In terms of assembly, component of the mitochondrial large ribosomal subunit (mt-LSU). Mature N.crassa 74S mitochondrial ribosomes consist of a small (37S) and a large (54S) subunit. The 37S small subunit contains a 16S ribosomal RNA (16S mt-rRNA) and 32 different proteins. The 54S large subunit contains a 23S rRNA (23S mt-rRNA) and 42 different proteins. uL23m forms the wall of the exit tunnel.

The protein localises to the mitochondrion. In terms of biological role, component of the mitochondrial ribosome (mitoribosome), a dedicated translation machinery responsible for the synthesis of mitochondrial genome-encoded proteins, including at least some of the essential transmembrane subunits of the mitochondrial respiratory chain. The mitoribosomes are attached to the mitochondrial inner membrane and translation products are cotranslationally integrated into the membrane. The sequence is that of Large ribosomal subunit protein uL23m (mrp20) from Neurospora crassa (strain ATCC 24698 / 74-OR23-1A / CBS 708.71 / DSM 1257 / FGSC 987).